The primary structure comprises 673 residues: DNA ligase (673 aa).

Residues 35–39 (DAQYD), 84–85 (SL), and Glu115 contribute to the NAD(+) site. Lys117 acts as the N6-AMP-lysine intermediate in catalysis. 4 residues coordinate NAD(+): Arg138, Glu178, Lys294, and Lys318. 4 residues coordinate Zn(2+): Cys412, Cys415, Cys430, and Cys435. Positions 594–673 (LQSDRLAGKS…DELHALLVDE (80 aa)) constitute a BRCT domain.

It belongs to the NAD-dependent DNA ligase family. LigA subfamily. Requires Mg(2+) as cofactor. The cofactor is Mn(2+).

The enzyme catalyses NAD(+) + (deoxyribonucleotide)n-3'-hydroxyl + 5'-phospho-(deoxyribonucleotide)m = (deoxyribonucleotide)n+m + AMP + beta-nicotinamide D-nucleotide.. DNA ligase that catalyzes the formation of phosphodiester linkages between 5'-phosphoryl and 3'-hydroxyl groups in double-stranded DNA using NAD as a coenzyme and as the energy source for the reaction. It is essential for DNA replication and repair of damaged DNA. This Herpetosiphon aurantiacus (strain ATCC 23779 / DSM 785 / 114-95) protein is DNA ligase.